Here is a 341-residue protein sequence, read N- to C-terminus: UDP-glucose 4-epimerase (341 aa).

It belongs to the polysaccharide synthase family.

It carries out the reaction UDP-alpha-D-glucose = UDP-alpha-D-galactose. Functionally, epimerizes UDP-galactose to UDP-glucose. The polypeptide is UDP-glucose 4-epimerase (capD) (Rickettsia akari (strain Hartford)).